The sequence spans 686 residues: Translation initiation factor IF-2 (686 aa).

The tract at residues 53–105 (EKPSVADEFEVEEKVVRSKKNSNKKKKKGKGNEDKRQENFAGRQQTQTVETPD) is disordered. The span at 69–81 (RSKKNSNKKKKKG) shows a compositional bias: basic residues. A tr-type G domain is found at 188–357 (ERPAVVTIMG…LLVSEVEEYK (170 aa)). The interval 197-204 (GHVDHGKT) is G1. Residue 197–204 (GHVDHGKT) coordinates GTP. The G2 stretch occupies residues 222–226 (GITQH). Positions 243 to 246 (DTPG) are G3. Residues 243-247 (DTPGH) and 297-300 (NKMD) each bind GTP. The tract at residues 297-300 (NKMD) is G4. The interval 333 to 335 (SAI) is G5.

This sequence belongs to the TRAFAC class translation factor GTPase superfamily. Classic translation factor GTPase family. IF-2 subfamily.

Its subcellular location is the cytoplasm. One of the essential components for the initiation of protein synthesis. Protects formylmethionyl-tRNA from spontaneous hydrolysis and promotes its binding to the 30S ribosomal subunits. Also involved in the hydrolysis of GTP during the formation of the 70S ribosomal complex. The sequence is that of Translation initiation factor IF-2 from Bacillus cereus (strain ATCC 10987 / NRS 248).